The following is an 849-amino-acid chain: Disks large homolog 3 (849 aa).

The tract at residues 32–101 is disordered; that stretch reads DWQVPDPYGP…GKNTPKLNGS (70 aa). Residues 41–53 show a composition bias toward gly residues; it reads PSGGNGASSGYGG. Residues 57–69 are compositionally biased toward polar residues; it reads QTLPSQAGATPTP. PDZ domains are found at residues 149 to 235, 244 to 330, and 404 to 484; these read EIVL…VRRR, EVNL…VAKP, and KIIL…AQYR. Ser157 carries the phosphoserine modification. Residues 519-589 enclose the SH3 domain; sequence KRSLYVRALF…PSKKRVEKKE (71 aa). The Guanylate kinase-like domain maps to 659-834; the sequence is ARPVIILGPM…IYNKIKQIIE (176 aa). Tyr705 bears the Phosphotyrosine mark.

It belongs to the MAGUK family. In terms of assembly, interacts through its PDZ domains with NETO1 and APC. Interacts through its first two PDZ domains with ERBB4. Interacts through its third PDZ domain with NLGN1, and probably with NLGN2 and NLGN3. Interacts through its PDZ domains with GRIN2B and SYNGAP1. Interacts through its guanylate kinase-like domain with DLGAP1, DLGAP2, DLGAP3 and DLGAP4. Interacts with FRMPD4 (via C-terminus). Interacts with LRFN2. Interacts with LRFN1 and LRFN4. Interacts with FLTP. Interacts with DGKI (via PDZ-binding motif).

Its function is as follows. Required for learning most likely through its role in synaptic plasticity following NMDA receptor signaling. In Rattus norvegicus (Rat), this protein is Disks large homolog 3 (Dlg3).